The sequence spans 491 residues: Cytochrome P450 2K3 (491 aa).

Cys-434 contacts heme.

It belongs to the cytochrome P450 family. Heme serves as cofactor.

It localises to the endoplasmic reticulum membrane. Its subcellular location is the microsome membrane. The enzyme catalyses an organic molecule + reduced [NADPH--hemoprotein reductase] + O2 = an alcohol + oxidized [NADPH--hemoprotein reductase] + H2O + H(+). This Oncorhynchus mykiss (Rainbow trout) protein is Cytochrome P450 2K3 (cyp2k3).